A 755-amino-acid chain; its full sequence is von Willebrand factor A domain-containing protein 2 (755 aa).

The N-terminal stretch at 1 to 23 (MPPFLLLEAVCVFLFSRVPPSLP) is a signal peptide. The VWFA 1 domain maps to 51–222 (DIMFLLDGSN…DATNGLFSTL (172 aa)). N-linked (GlcNAc...) asparagine glycosylation occurs at N147. An EGF-like 1 domain is found at 296 to 333 (PGPCDSQPCQNGGTCVPEGLDGYQCLCPLAFGGEANCA). Cystine bridges form between C299–C310, C304–C320, and C322–C332. VWFA domains lie at 343–517 (DLLF…QGKL) and 531–705 (DLVF…IEWL). An EGF-like 2 domain is found at 712–748 (PVNLCKPSPCMNEGSCVLQNGSYRCKCRDGWEGPHCE). 3 cysteine pairs are disulfide-bonded: C716–C727, C721–C736, and C738–C747.

As to quaternary structure, forms monomers and multimers. A 55 kDa form is produced by proteolytic cleavage. In terms of tissue distribution, expression is generally absent in normal colon and other normal body tissues, but it is induced an average of 78-fold in Stage II, III, and IV colon cancers, as well as in colon adenomas and colon cancer cell lines.

It localises to the secreted. This is von Willebrand factor A domain-containing protein 2 (VWA2) from Homo sapiens (Human).